We begin with the raw amino-acid sequence, 2215 residues long: Unconventional myosin-VIIa (2215 aa).

In terms of domain architecture, Myosin motor spans 65–741 (HGVEDMIRLG…HDMLLEVERD (677 aa)). Position 158–165 (158–165 (GESGAGKT)) interacts with ATP. The actin-binding stretch occupies residues 632-639 (FVRCIKPN). 5 consecutive IQ domains span residues 745 to 765 (TDRV…SNFL), 768 to 788 (KSAA…KNYE), 791 to 811 (RLGF…KQYR), 814 to 834 (RQRI…KAFR), and 837 to 857 (LWAV…RLHR). An SAH region spans residues 858-935 (RLRVEYQRRL…LEQMEKARHE (78 aa)). The MyTH4 1 domain occupies 1017 to 1253 (YTRRPLKQPL…PSWLELQATK (237 aa)). The FERM 1 domain maps to 1258-1602 (IMLPVTFMDG…LVVTFLEGLR (345 aa)). T1563 is modified (phosphothreonine). Phosphoserine is present on S1569. T1571 carries the phosphothreonine modification. One can recognise an SH3 domain in the interval 1603–1672 (KRSKYVVALQ…PTDCVYVMPT (70 aa)). One can recognise a MyTH4 2 domain in the interval 1747-1896 (HTREPLKQAL…PHLVEVEAIQ (150 aa)). An FERM 2 domain is found at 1902 to 2205 (IFHKVYFPDD…SYISQMLTAM (304 aa)).

Belongs to the TRAFAC class myosin-kinesin ATPase superfamily. Myosin family. Might homodimerize in a two headed molecule through the formation of a coiled-coil rod. Identified in a complex with USH1C and USH1G. Interacts with MYRIP. Interacts with RPE65. Interacts with CIB2. May interact with CALM. Interacts with WHRN. Interacts with PLEKHB1 (via PH domain). Interacts with PCDH15. Interacts with TWF2. Interacts with USH1G. Interacts with MYH9. Interacts (via MyTH4-FERM domains) with cytoplasmic regions of ADGRV1 and USH2A. Interacts with PDZD7 (via MyTH4-FERM domains). Interacts with CALML4. Detected in mechanosensory stereocilia of cochlea hair cells (at protein level). Expressed in the retina, cochlea, kidney and liver.

The protein resides in the cytoplasm. It is found in the cell cortex. The protein localises to the cytoskeleton. It localises to the synapse. Myosins are actin-based motor molecules with ATPase activity. Unconventional myosins serve in intracellular movements. Their highly divergent tails bind to membranous compartments, which are then moved relative to actin filaments. In the retina, plays an important role in the renewal of the outer photoreceptor disks. Plays an important role in the distribution and migration of retinal pigment epithelial (RPE) melanosomes and phagosomes, and in the regulation of opsin transport in retinal photoreceptors. Mediates intracellular transport of RPE65 in the retina pigment epithelium. In the inner ear, plays an important role in differentiation, morphogenesis and organization of cochlear hair cell bundles. Motor protein that is a part of the functional network formed by USH1C, USH1G, CDH23 and MYO7A that mediates mechanotransduction in cochlear hair cells. Required for normal hearing. Involved in hair-cell vesicle trafficking of aminoglycosides, which are known to induce ototoxicity. The sequence is that of Unconventional myosin-VIIa (Myo7a) from Mus musculus (Mouse).